We begin with the raw amino-acid sequence, 454 residues long: Ribosomal protein uS12 methylthiotransferase RimO (454 aa).

Residues 9 to 124 (PKIGFVSLGC…VMDAVHLHMP (116 aa)) enclose the MTTase N-terminal domain. [4Fe-4S] cluster is bound by residues Cys-18, Cys-54, Cys-83, Cys-155, Cys-159, and Cys-162. A Radical SAM core domain is found at 141-382 (LTPKHFAYLK…MLLQEEISKK (242 aa)). Residues 385 to 454 (QAKVGKTMRV…ADAHDLWAEA (70 aa)) enclose the TRAM domain.

It belongs to the methylthiotransferase family. RimO subfamily. [4Fe-4S] cluster is required as a cofactor.

The protein resides in the cytoplasm. The catalysed reaction is L-aspartate(89)-[ribosomal protein uS12]-hydrogen + (sulfur carrier)-SH + AH2 + 2 S-adenosyl-L-methionine = 3-methylsulfanyl-L-aspartate(89)-[ribosomal protein uS12]-hydrogen + (sulfur carrier)-H + 5'-deoxyadenosine + L-methionine + A + S-adenosyl-L-homocysteine + 2 H(+). Functionally, catalyzes the methylthiolation of an aspartic acid residue of ribosomal protein uS12. The protein is Ribosomal protein uS12 methylthiotransferase RimO of Herminiimonas arsenicoxydans.